A 764-amino-acid polypeptide reads, in one-letter code: Oxysterol-binding protein-related protein 10 (764 aa).

The interval 1-74 (MERAVQGTDG…PSGGGGRRRE (74 aa)) is disordered. 2 stretches are compositionally biased toward low complexity: residues 15–47 (NSSSRSSSRATSAGSSPSCSLAGRGVSSRSAAA) and 55–65 (RSSPGSVAASP). Residues Ser-29 and Ser-30 each carry the phosphoserine modification. An Omega-N-methylarginine modification is found at Arg-38. Phosphoserine occurs at positions 57, 60, and 64. The region spanning 74-171 (EPALEGVLSK…WVTQLRACAK (98 aa)) is the PH domain. Thr-196 carries the post-translational modification Phosphothreonine. Ser-201, Ser-209, and Ser-223 each carry phosphoserine. Disordered stretches follow at residues 304–335 (GQPSQKPGASENILGWHGSKSHSTEQLKNGTL) and 354–391 (AEDEQTSQPEPEPNSGSELVLSEDEKSDNEDKEETELG). Polar residues predominate over residues 359-370 (TSQPEPEPNSGS). Positions 374–389 (LSEDEKSDNEDKEETE) are enriched in acidic residues. Residues 413–418 (LTKVVL) and 477–480 (KPYN) each bind a 1,2-diacyl-sn-glycero-3-phospho-(1D-myo-inositol 4-phosphate). A 1,2-diacyl-sn-glycero-3-phospho-L-serine-binding positions include 413-418 (LTKVVL) and Asn-480. Residues 501-520 (KRTASRSPASCHEHPMADDP) are disordered. Basic and acidic residues predominate over residues 511–520 (CHEHPMADDP). 535-536 (HH) contacts a 1,2-diacyl-sn-glycero-3-phospho-(1D-myo-inositol 4-phosphate). Ser-561 is a binding site for a 1,2-diacyl-sn-glycero-3-phospho-L-serine. Residues 713–740 (DIDAATEQKRHLEEKQRVEERKRENLRT) adopt a coiled-coil conformation. Residues Lys-721, Glu-725, and Arg-729 each contribute to the a 1,2-diacyl-sn-glycero-3-phospho-(1D-myo-inositol 4-phosphate) site.

This sequence belongs to the OSBP family. As to quaternary structure, interacts with OSBPL9. Interacts with DIAPH1.

The protein localises to the cytoplasm. It localises to the cytoskeleton. Probable lipid transporter involved in lipid countertransport between the endoplasmic reticulum and the plasma membrane. Its ability to bind phosphatidylserine, suggests that it specifically exchanges phosphatidylserine with phosphatidylinositol 4-phosphate (PI4P), delivering phosphatidylserine to the plasma membrane in exchange for PI4P. Plays a role in negative regulation of lipid biosynthesis. Negatively regulates APOB secretion from hepatocytes. Binds cholesterol and acidic phospholipids. Also binds 25-hydroxycholesterol. Binds phosphatidylserine. In Homo sapiens (Human), this protein is Oxysterol-binding protein-related protein 10 (OSBPL10).